The chain runs to 1300 residues: Insulin receptor-related protein (1300 aa).

A signal peptide spans 1–26 (MARPKLWPWGILLLVSLLSAGFNLDT). N-linked (GlcNAc...) asparagine glycosylation is present at Asn-47. Disulfide bonds link Cys-214/Cys-222, Cys-216/Cys-228, Cys-229/Cys-237, Cys-233/Cys-246, Cys-249/Cys-258, Cys-262/Cys-274, Cys-280/Cys-300, Cys-304/Cys-317, and Cys-320/Cys-324. N-linked (GlcNAc...) asparagine glycosylation occurs at Asn-311. N-linked (GlcNAc...) asparagine glycans are attached at residues Asn-411, Asn-492, Asn-528, Asn-616, Asn-634, Asn-756, Asn-885, and Asn-898. 2 Fibronectin type-III domains span residues 483-603 (QTRT…TLPA) and 607-707 (VPQD…AQEA). An intrachain disulfide couples Cys-657 to Cys-864. Positions 740-762 (DAGRHRRAIGSPRPGGNSSDFEI) are disordered. The Extracellular portion of the chain corresponds to 747 to 921 (AIGSPRPGGN…PEEEDSGGLH (175 aa)). Residues 818 to 912 (IPGKLSWEAA…DSVAFYIPGP (95 aa)) enclose the Fibronectin type-III 3 domain. A helical transmembrane segment spans residues 922 to 943 (ILLTVTPAGLMLLIILAALGFF). Residues 944 to 1300 (YSRKRNGTLY…CSLQNGGPEH (357 aa)) lie on the Cytoplasmic side of the membrane. The region spanning 979 to 1254 (ISIIRELGQG…SIQKELRPSF (276 aa)) is the Protein kinase domain. ATP is bound by residues 985–993 (LGQGSFGMV) and Lys-1013. Asp-1115 serves as the catalytic Proton acceptor. A phosphotyrosine; by autocatalysis mark is found at Tyr-1145 and Tyr-1146. The disordered stretch occupies residues 1270-1300 (GLQPTTDAESSSPPTSKGASDCSLQNGGPEH). The segment covering 1272 to 1300 (QPTTDAESSSPPTSKGASDCSLQNGGPEH) has biased composition (polar residues).

Belongs to the protein kinase superfamily. Tyr protein kinase family. Insulin receptor subfamily. Probable tetramer of 2 alpha and 2 beta chains linked by disulfide bonds. The alpha chains contribute to the formation of the ligand-binding domain, while the beta chains carry the kinase domain. In terms of processing, autophosphorylated on tyrosine residues between pH 7.9 and pH 10.5.

It is found in the membrane. It carries out the reaction L-tyrosyl-[protein] + ATP = O-phospho-L-tyrosyl-[protein] + ADP + H(+). Functionally, receptor with tyrosine-protein kinase activity. Functions as a pH sensing receptor which is activated by increased extracellular pH. Activates an intracellular signaling pathway that involves IRS1 and AKT1/PKB. In Cavia porcellus (Guinea pig), this protein is Insulin receptor-related protein (INSRR).